The primary structure comprises 233 residues: Ribose-5-phosphate isomerase A (233 aa).

Residues 28–31 (TGST), 83–86 (DGAD), and 96–99 (KGGG) contribute to the substrate site. Glu-105 functions as the Proton acceptor in the catalytic mechanism. Lys-123 serves as a coordination point for substrate.

Belongs to the ribose 5-phosphate isomerase family. As to quaternary structure, homodimer.

It catalyses the reaction aldehydo-D-ribose 5-phosphate = D-ribulose 5-phosphate. It participates in carbohydrate degradation; pentose phosphate pathway; D-ribose 5-phosphate from D-ribulose 5-phosphate (non-oxidative stage): step 1/1. Catalyzes the reversible conversion of ribose-5-phosphate to ribulose 5-phosphate. The protein is Ribose-5-phosphate isomerase A of Rhizobium rhizogenes (strain K84 / ATCC BAA-868) (Agrobacterium radiobacter).